The primary structure comprises 217 residues: Coiled-coil domain-containing protein 124-B (217 aa).

A disordered region spans residues 1-123 (MPKKFQSENT…EKPKTHLEIP (123 aa)). Composition is skewed to basic and acidic residues over residues 18–45 (RKAEAKAVADAKRKKETEDAFWQDDDKH), 52–74 (RKEEKEKKRLELLERKKESQRLL), and 98–123 (QIEETLCKEEKHKDAPEKPKTHLEIP). Residues 41 to 83 (DDDKHVVRKEHRKEEKEKKRLELLERKKESQRLLDEEDSKMKG) are a coiled coil.

The protein belongs to the CCDC124 family. Associates with translationally inactive ribosomes in the nonrotated state.

It is found in the cytoplasm. The protein localises to the cytoskeleton. Its subcellular location is the microtubule organizing center. It localises to the centrosome. The protein resides in the midbody. Ribosome-binding protein involved in ribosome hibernation: associates with translationally inactive ribosomes and stabilizes the nonrotated conformation of the 80S ribosome, thereby promoting ribosome preservation and storage. In Xenopus laevis (African clawed frog), this protein is Coiled-coil domain-containing protein 124-B (ccdc124-b).